Consider the following 346-residue polypeptide: Methylthioribose-1-phosphate isomerase (346 aa).

Substrate is bound by residues 45–47, arginine 87, and glutamine 194; that span reads RGA. Catalysis depends on aspartate 235, which acts as the Proton donor. Residue 245-246 coordinates substrate; the sequence is NK.

The protein belongs to the eIF-2B alpha/beta/delta subunits family. MtnA subfamily.

The catalysed reaction is 5-(methylsulfanyl)-alpha-D-ribose 1-phosphate = 5-(methylsulfanyl)-D-ribulose 1-phosphate. It participates in amino-acid biosynthesis; L-methionine biosynthesis via salvage pathway; L-methionine from S-methyl-5-thio-alpha-D-ribose 1-phosphate: step 1/6. Functionally, catalyzes the interconversion of methylthioribose-1-phosphate (MTR-1-P) into methylthioribulose-1-phosphate (MTRu-1-P). In Syntrophomonas wolfei subsp. wolfei (strain DSM 2245B / Goettingen), this protein is Methylthioribose-1-phosphate isomerase.